The chain runs to 426 residues: Cephalotocin receptor 2 (426 aa).

The Extracellular portion of the chain corresponds to methionine 1–alanine 51. Asparagine 32 and asparagine 35 each carry an N-linked (GlcNAc...) asparagine glycan. Residues valine 52–leucine 72 traverse the membrane as a helical segment. Topologically, residues tryptophan 73 to phenylalanine 84 are cytoplasmic. A helical membrane pass occupies residues isoleucine 85 to isoleucine 105. The Extracellular segment spans residues tryptophan 106 to arginine 120. An intrachain disulfide couples cysteine 119 to cysteine 198. Residues phenylalanine 121–alanine 141 form a helical membrane-spanning segment. The Cytoplasmic portion of the chain corresponds to valine 142 to lysine 165. Residues isoleucine 166 to methionine 186 form a helical membrane-spanning segment. Residues glutamine 187 to leucine 208 are Extracellular-facing. The chain crosses the membrane as a helical span at residues threonine 209–phenylalanine 229. The Cytoplasmic portion of the chain corresponds to threonine 230–alanine 288. The helical transmembrane segment at valine 289–phenylalanine 309 threads the bilayer. The Extracellular portion of the chain corresponds to aspartate 310–valine 319. A helical transmembrane segment spans residues valine 320–phenylalanine 340. The Cytoplasmic portion of the chain corresponds to asparagine 341–threonine 426. Residues glycine 373–threonine 426 are disordered. Basic and acidic residues predominate over residues valine 375–arginine 399. The segment covering glycine 402 to threonine 426 has biased composition (polar residues).

Belongs to the G-protein coupled receptor 1 family. Vasopressin/oxytocin receptor subfamily. In terms of tissue distribution, present in various peripheral tissues with highest expression in branchia and vas deferens. Very low expression detected in nervous system.

The protein resides in the cell membrane. Its function is as follows. Acts as a receptor for cephalotocin. This is Cephalotocin receptor 2 from Octopus vulgaris (Common octopus).